The sequence spans 77 residues: Large ribosomal subunit protein bL28 (77 aa).

It belongs to the bacterial ribosomal protein bL28 family.

The protein is Large ribosomal subunit protein bL28 of Polaromonas naphthalenivorans (strain CJ2).